A 1344-amino-acid polypeptide reads, in one-letter code: Period circadian protein homolog 2 (1344 aa).

Disordered regions lie at residues 1–21 (MDCIEVRGFYSSTEEQNPEQQ) and 42–112 (EYSG…NGKD). Over residues 10-21 (YSSTEEQNPEQQ) the composition is skewed to polar residues. Residues 78-89 (SSGSSGNDFSGN) are compositionally biased toward low complexity. A compositionally biased stretch (basic and acidic residues) spans 99 to 111 (HDSHGHESDENGK). The Nuclear export signal 1 signature appears at 161-170 (LLKTLQELKA). The PAS 1 domain occupies 231-298 (ITSEYIMKNA…FYTSTTPYRL (68 aa)). An LXXLL motif is present at residues 358-362 (LCCVL). The region spanning 371 to 437 (YEAPRIPPDK…MLAIHKKILQ (67 aa)) is the PAS 2 domain. The 44-residue stretch at 445-488 (YSPIRFCTRNGDYITMDTSWSSFINPWSRKVSFIIGRHKVRTGP) folds into the PAC domain. The Nuclear export signal 2 signature appears at 512–521 (ITEQIYRLLL). 5 disordered regions span residues 531 to 609 (GYGS…QVKD), 661 to 686 (AKRKCEPSSSVNSSVHEQKASVNAIQ), 823 to 894 (LQDK…WSPS), 1038 to 1065 (TETRNEPSRSCTPQSVGPQDQASPPLFQ), and 1107 to 1126 (TTDAGSGKGSLPAESPMDAQ). A compositionally biased stretch (low complexity) spans 549 to 559 (SSSDSTGNNND). Composition is skewed to basic and acidic residues over residues 560–573 (DTQKDKTISQDARK) and 583–597 (TENKGKLEYKREPSA). Over residues 667 to 684 (PSSSVNSSVHEQKASVNA) the composition is skewed to polar residues. Positions 825-836 (DKPKGRPGERGG) are enriched in basic and acidic residues. The short motif at 851-865 (KKSGKNRKSKRIKPQ) is the Nuclear localization signal element. Residues 852 to 862 (KSGKNRKSKRI) are compositionally biased toward basic residues. Polar residues-rich tracts occupy residues 865–875 (QESSDSTTSGT), 885–894 (GLNTTAWSPS), and 1045–1059 (SRSCTPQSVGPQDQA). The LXXLL motif lies at 1138-1142 (LDILL). Over residues 1149 to 1172 (GTGSASSGSGVSAAAESLGSGSNG) the composition is skewed to low complexity. Positions 1149–1197 (GTGSASSGSGVSAAAESLGSGSNGCDMSGSRTGSSETSHTSKYFGSIDS) are disordered. A compositionally biased stretch (polar residues) spans 1177 to 1197 (GSRTGSSETSHTSKYFGSIDS). Residues 1244 to 1344 (SRDLETVLKE…PLSQVNEEQT (101 aa)) form a CRY binding domain region.

As to quaternary structure, component of the circadian clock oscillator which includes the CRY proteins, CLOCK or NPAS2, BMAL1 or BMAL2, CSNK1E, and the PER proteins. Interacts directly with PER3, and through a C-terminal domain, with CRY1 and CRY2.

It localises to the nucleus. The protein resides in the cytoplasm. Functionally, transcriptional repressor which forms a core component of the circadian clock. The circadian clock, an internal time-keeping system, regulates various physiological processes through the generation of approximately 24 hour circadian rhythms in gene expression, which are translated into rhythms in metabolism and behavior. It is derived from the Latin roots 'circa' (about) and 'diem' (day) and acts as an important regulator of a wide array of physiological functions including metabolism, sleep, body temperature, blood pressure, endocrine, immune, cardiovascular, and renal function. Consists of two major components: the central clock, residing in the suprachiasmatic nucleus (SCN) of the brain, and the peripheral clocks that are present in nearly every tissue and organ system. Both the central and peripheral clocks can be reset by environmental cues, also known as Zeitgebers (German for 'timegivers'). The predominant Zeitgeber for the central clock is light, which is sensed by retina and signals directly to the SCN. The central clock entrains the peripheral clocks through neuronal and hormonal signals, body temperature and feeding-related cues, aligning all clocks with the external light/dark cycle. Circadian rhythms allow an organism to achieve temporal homeostasis with its environment at the molecular level by regulating gene expression to create a peak of protein expression once every 24 hours to control when a particular physiological process is most active with respect to the solar day. Transcription and translation of core clock components (CLOCK, NPAS2, BMAL1, BMAL2, PER1, PER2, PER3, CRY1 and CRY2) plays a critical role in rhythm generation, whereas delays imposed by post-translational modifications (PTMs) are important for determining the period (tau) of the rhythms (tau refers to the period of a rhythm and is the length, in time, of one complete cycle). A diurnal rhythm is synchronized with the day/night cycle, while the ultradian and infradian rhythms have a period shorter and longer than 24 hours, respectively. Disruptions in the circadian rhythms contribute to the pathology of cardiovascular diseases, cancer, metabolic syndrome and aging. A transcription/translation feedback loop (TTFL) forms the core of the molecular circadian clock mechanism. Transcription factors, CLOCK or NPAS2 and BMAL1 or BMAL2, form the positive limb of the feedback loop, act in the form of a heterodimer and activate the transcription of core clock genes and clock-controlled genes (involved in key metabolic processes), harboring E-box elements (5'-CACGTG-3') within their promoters. The core clock genes: PER1/2/3 and CRY1/2 which are transcriptional repressors form the negative limb of the feedback loop and interact with the CLOCK|NPAS2-BMAL1|BMAL2 heterodimer inhibiting its activity and thereby negatively regulating their own expression. This heterodimer also activates nuclear receptors NR1D1/2 and RORA/B/G, which form a second feedback loop and which activate and repress BMAL1 transcription, respectively. PER1 and PER2 proteins transport CRY1 and CRY2 into the nucleus with appropriate circadian timing, but also contribute directly to repression of clock-controlled target genes through interaction with several classes of RNA-binding proteins, helicases and others transcriptional repressors. PER appears to regulate circadian control of transcription by at least three different modes. First, interacts directly with the CLOCK-BMAL1 at the tail end of the nascent transcript peak to recruit complexes containing the SIN3-HDAC that remodel chromatin to repress transcription. Second, brings H3K9 methyltransferases such as SUV39H1 and SUV39H2 to the E-box elements of the circadian target genes, like PER2 itself or PER1. The recruitment of each repressive modifier to the DNA seems to be very precisely temporally orchestrated by the large PER complex, the deacetylases acting before than the methyltransferases. Additionally, large PER complexes are also recruited to the target genes 3' termination site through interactions with RNA-binding proteins and helicases that may play a role in transcription termination to regulate transcription independently of CLOCK-BMAL1 interactions. The chain is Period circadian protein homolog 2 (PER2) from Gallus gallus (Chicken).